Here is a 516-residue protein sequence, read N- to C-terminus: Cytochrome P450 monooxygenase otaC (516 aa).

Residues 13-30 (FLWTAFAVGVVYCCTRMV) traverse the membrane as a helical segment. Cys-454 contacts heme.

Belongs to the cytochrome P450 family. Heme is required as a cofactor.

The protein resides in the membrane. The catalysed reaction is 7-methylmellein + 3 reduced [NADPH--hemoprotein reductase] + 3 O2 = 7-carboxymellein + 3 oxidized [NADPH--hemoprotein reductase] + 4 H2O + 4 H(+). It functions in the pathway mycotoxin biosynthesis. Cytochrome P450 monooxygenase; part of the gene cluster that mediates the biosynthesis of ochratoxin A (OTA), a mycotoxin composed of a chlorinated type I polyketide dihydroisocoumarin moiety linked to L-phenylalanine, and demonstrated to have nephrotoxic, immunotoxic, genotoxic, neurotoxic, and teratogenic properties. OtaC catalyzes the oxidation of 7-methylmellein (7-MM) into 7-carboxymellein. The pathway begins with the highly reducing polyketide synthase otaA that catalyzes the formation of the isocoumarin group during the initial stages of biosynthesis, starting from one acetate and 4 malonate units, to originate the characteristic pentaketide skeleton 7-methylmellein (7-MM) of the OTA molecule. The newly identified cyclase otaY might be involved in the polyketide cyclization reaction during the initial steps of the OTA biosynthesis. 7-MM is then oxidized into 7-carboxymellein (also called ochratoxin beta) by the cytochrome P450 monooxygenase otaC. The NRPS encoded by the otaB gene is involved in the linking of phenylalanine to the dihydroisocoumarin ring. The reaction catalyzed by NRPS results in the production of ochratoxin B (OTB), which is the non-chlorinated analog of OTA and which subsequently serves as the substrate of the halogenase otaD for chlorination activity to form the final molecular structure of OTA, containing a chlorine atom in the C-5 position of the molecule. The chain is Cytochrome P450 monooxygenase otaC from Aspergillus carbonarius (strain ITEM 5010).